A 215-amino-acid chain; its full sequence is Protein-methionine-sulfoxide reductase heme-binding subunit MsrQ (215 aa).

6 consecutive transmembrane segments (helical) span residues 17-37 (AAIW…FYLA), 50-70 (FEHL…LVTP), 85-105 (ALGL…LVLD), 121-141 (PYIM…LTSN), 152-172 (WNTL…HFVL), and 177-197 (ITLE…YRLV).

It belongs to the MsrQ family. As to quaternary structure, heterodimer of a catalytic subunit (MsrP) and a heme-binding subunit (MsrQ). The cofactor is FMN. Heme b serves as cofactor.

It localises to the cell inner membrane. Functionally, part of the MsrPQ system that repairs oxidized periplasmic proteins containing methionine sulfoxide residues (Met-O), using respiratory chain electrons. Thus protects these proteins from oxidative-stress damage caused by reactive species of oxygen and chlorine generated by the host defense mechanisms. MsrPQ is essential for the maintenance of envelope integrity under bleach stress, rescuing a wide series of structurally unrelated periplasmic proteins from methionine oxidation. MsrQ provides electrons for reduction to the reductase catalytic subunit MsrP, using the quinone pool of the respiratory chain. In Agrobacterium fabrum (strain C58 / ATCC 33970) (Agrobacterium tumefaciens (strain C58)), this protein is Protein-methionine-sulfoxide reductase heme-binding subunit MsrQ.